Here is a 218-residue protein sequence, read N- to C-terminus: Protein GrpE (218 aa).

Basic and acidic residues-rich tracts occupy residues 1 to 13 (MSKN…HQNN) and 20 to 32 (VDKK…NKQE). Residues 1–32 (MSKNNENIKHQNNDKVNNQVDKKETKNHNKQE) are disordered.

This sequence belongs to the GrpE family. As to quaternary structure, homodimer.

The protein resides in the cytoplasm. In terms of biological role, participates actively in the response to hyperosmotic and heat shock by preventing the aggregation of stress-denatured proteins, in association with DnaK and GrpE. It is the nucleotide exchange factor for DnaK and may function as a thermosensor. Unfolded proteins bind initially to DnaJ; upon interaction with the DnaJ-bound protein, DnaK hydrolyzes its bound ATP, resulting in the formation of a stable complex. GrpE releases ADP from DnaK; ATP binding to DnaK triggers the release of the substrate protein, thus completing the reaction cycle. Several rounds of ATP-dependent interactions between DnaJ, DnaK and GrpE are required for fully efficient folding. The sequence is that of Protein GrpE from Ureaplasma parvum serovar 3 (strain ATCC 27815 / 27 / NCTC 11736).